Reading from the N-terminus, the 375-residue chain is Odorant receptor 10 (375 aa).

Transmembrane regions (helical) follow at residues 32–52 (ISIIPVTVMTFFMFLDLGHSW), 58–78 (VIIKGYFAVLYFNAVLRTLIL), 125–145 (NLALGAIISTCFTVYPMFTGV), 167–187 (IIYLVQVVLTFPGCCMYIPFT), 250–270 (YICFVEFLSFGLMLCALLFLL), and 279–299 (IVIVAAYIFMIISQIFAFYWH).

This sequence belongs to the insect chemoreceptor superfamily. Heteromeric odorant receptor channel (TC 1.A.69) family. In terms of tissue distribution, expressed in female antenna, maxillary palp and proboscis. Expressed in female body. Expressed in male tissues.

It localises to the cell membrane. Its function is as follows. Odorant receptor which complexes with Orco, a coreceptor, to form odorant-sensing units, providing sensitive and prolonged odorant signaling and calcium permeability. Can sense indole, 1-octen-3-ol, 3-methyindole and an insect repellent DEET. This is Odorant receptor 10 from Aedes albopictus (Asian tiger mosquito).